The sequence spans 692 residues: Elongation factor G (692 aa).

A tr-type G domain is found at 8–282 (EKTRNIGIMA…AVIDYLPSPL (275 aa)). Residues 17–24 (AHVDAGKT), 81–85 (DTPGH), and 135–138 (NKMD) each bind GTP.

It belongs to the TRAFAC class translation factor GTPase superfamily. Classic translation factor GTPase family. EF-G/EF-2 subfamily.

Its subcellular location is the cytoplasm. Its function is as follows. Catalyzes the GTP-dependent ribosomal translocation step during translation elongation. During this step, the ribosome changes from the pre-translocational (PRE) to the post-translocational (POST) state as the newly formed A-site-bound peptidyl-tRNA and P-site-bound deacylated tRNA move to the P and E sites, respectively. Catalyzes the coordinated movement of the two tRNA molecules, the mRNA and conformational changes in the ribosome. The protein is Elongation factor G of Streptococcus agalactiae serotype Ia (strain ATCC 27591 / A909 / CDC SS700).